The sequence spans 603 residues: Glutathione-regulated potassium-efflux system protein KefB (603 aa).

The next 13 membrane-spanning stretches (helical) occupy residues 5–25 (ALLTAGVLFLFVAVVAVPIAA), 29–49 (IGAVLGYLIAGIAIGPWGLGF), 55–75 (AILHFSELGVVFLMFIIGLEL), 87–107 (IFGVGAAQVGLSTLLLGGALY), 115–135 (SALIGGVGLAMSSTAMALQLM), 152–172 (VLLFQDLAVIPALALIPILAG), 180–202 (WERIGLKVAAFLGMLIGGRYLVR), 207–227 (FIAASGVREVFTAAALLLVLG), 230–250 (LFMETLGLSMALGTFIAGILL), 268–288 (GLLLGLFFISVGMALNLGILY), 291–311 (IVKIMVAVLVLVAVKAAVLYF), 326–346 (FAGVLSQGGEFAFVLFSAAAS), and 356–376 (PLLLVTVTLSMMTTPLLMQLI). One can recognise an RCK N-terminal domain in the interval 400 to 521 (EPQVIVVGFG…VRHFSRETFS (122 aa)).

This sequence belongs to the monovalent cation:proton antiporter 2 (CPA2) transporter (TC 2.A.37) family. KefB subfamily. As to quaternary structure, interacts with the regulatory subunit KefG.

The protein resides in the cell inner membrane. Its function is as follows. Pore-forming subunit of a potassium efflux system that confers protection against electrophiles. Catalyzes K(+)/H(+) antiport. The polypeptide is Glutathione-regulated potassium-efflux system protein KefB (Pectobacterium carotovorum subsp. carotovorum (strain PC1)).